The sequence spans 273 residues: MSLYRDSAVVLRVQKLGEADRIITLLTRRYGKVRAVAKGVRRTTSRFGARVEPFCHIDVQLYTGRTLDVITQVQTLDAFGAHIVDDYQRYTSACAVLETVDRLAAEEGEPVLRLYLLATGALRALAGRERDSSLVLDAFLLRAMSFAGWAPALDECARCNARGPHAAFNVAAGGAVCAECRPAGSVRPSAATLPLLEALLHGDWAVAEAATTPVRREGSGLIAAHLQWHMERQLRSLPLVERSEWKVPEIIRERAAELGATQDPVASPAGEDG.

Belongs to the RecO family.

Its function is as follows. Involved in DNA repair and RecF pathway recombination. The sequence is that of DNA repair protein RecO from Saccharopolyspora erythraea (strain ATCC 11635 / DSM 40517 / JCM 4748 / NBRC 13426 / NCIMB 8594 / NRRL 2338).